A 92-amino-acid chain; its full sequence is Small ribosomal subunit protein bS18c (92 aa).

Belongs to the bacterial ribosomal protein bS18 family. Part of the 30S ribosomal subunit.

Its subcellular location is the plastid. This Epifagus virginiana (Beechdrops) protein is Small ribosomal subunit protein bS18c (rps18).